We begin with the raw amino-acid sequence, 472 residues long: Cysteine--tRNA ligase (472 aa).

Zn(2+) is bound at residue Cys-29. The 'HIGH' region motif lies at 31–41; the sequence is ITVYDYCHLGH. Residues Cys-214, His-239, and Glu-243 each coordinate Zn(2+). The short motif at 271-275 is the 'KMSKS' region element; it reads KMSKS. Position 274 (Lys-274) interacts with ATP.

This sequence belongs to the class-I aminoacyl-tRNA synthetase family. In terms of assembly, monomer. The cofactor is Zn(2+).

The protein localises to the cytoplasm. It catalyses the reaction tRNA(Cys) + L-cysteine + ATP = L-cysteinyl-tRNA(Cys) + AMP + diphosphate. The protein is Cysteine--tRNA ligase of Picosynechococcus sp. (strain ATCC 27264 / PCC 7002 / PR-6) (Agmenellum quadruplicatum).